We begin with the raw amino-acid sequence, 232 residues long: Large ribosomal subunit protein uL1 (232 aa).

This sequence belongs to the universal ribosomal protein uL1 family. As to quaternary structure, part of the 50S ribosomal subunit.

Its function is as follows. Binds directly to 23S rRNA. The L1 stalk is quite mobile in the ribosome, and is involved in E site tRNA release. Protein L1 is also a translational repressor protein, it controls the translation of the L11 operon by binding to its mRNA. The protein is Large ribosomal subunit protein uL1 of Xylella fastidiosa (strain M12).